The primary structure comprises 150 residues: Catabolic 3-dehydroquinase 1 (150 aa).

Tyrosine 24 serves as the catalytic Proton acceptor. Residues asparagine 75, histidine 81, and aspartate 88 each coordinate substrate. Histidine 101 acts as the Proton donor in catalysis. Substrate contacts are provided by residues 102-103 and arginine 112; that span reads VS.

It belongs to the type-II 3-dehydroquinase family. In terms of assembly, homododecamer. Adopts a ring-like structure, composed of an arrangement of two hexameric rings stacked on top of one another.

It carries out the reaction 3-dehydroquinate = 3-dehydroshikimate + H2O. Its pathway is aromatic compound metabolism; 3,4-dihydroxybenzoate biosynthesis; 3,4-dihydroxybenzoate from 3-dehydroquinate: step 1/2. Functionally, is involved in the catabolism of quinate. Allows the utilization of quinate as carbon source via the beta-ketoadipate pathway. The polypeptide is Catabolic 3-dehydroquinase 1 (Neosartorya fischeri (strain ATCC 1020 / DSM 3700 / CBS 544.65 / FGSC A1164 / JCM 1740 / NRRL 181 / WB 181) (Aspergillus fischerianus)).